The following is a 340-amino-acid chain: MSTSTEKRSKENLPWVEKYRPETLDEVYGQNEVITTVRKFVDEGKLPHLLFYGPPGTGKTSTIVALAREIYGKNYSNMVLELNASDDRGIDVVRNQIKDFASTRQIFSKGFKLIILDEADAMTNAAQNALRRVIERYTKNTRFCVLANYAHKLTPALLSRCTRFRFQPLPQEAIERRIANVLVHEKLKLSPNAEKALIELSNGDMRRVLNVLQSCKATLDNPDEDEISDDVIYECCGAPRPSDLKAVLKSILEDDWGTAHYTLNKVRSAKGLALIDLIEGIVKILEDYELQNEETRVHLLTKLADIEYSISKGGNDQIQGSAVIGAIKASFENETVKANV.

Ser2 bears the N-acetylserine mark. ATP-binding positions include Val16–Tyr19, Arg20, Tyr28, Gly53–Ser61, Asn148, and Arg206.

The protein belongs to the activator 1 small subunits family. As to quaternary structure, replication factor C (RFC) is a heteropentamer of subunits RFC1, RFC2, RFC3, RFC4 and RFC5 and forms a complex with POL30/PCNA in the presence of ATP. Component of the RAD24-RFC complex which consists of RAD14, RFC2, RFC3, RFC4 and RFC5 and associates with the checkpoint clamp DDC1:MEC3:RAD17 complex. Component of the ELG1-RFC complex which consists of ELG1, RFC2, RFC3, RFC4 and RFC5. Component of the CTF18-RFC complex, which consists of CTF18, CTF8, DCC1, RFC2, RFC3, RFC4 and RFC5. RFC3 interacts with ECO1 and POL30/PCNA.

It is found in the nucleus. Functionally, component of ATP-dependent clamp loader (RFC and RFC-like) complexes for DNA clamps, such as the POL30/PCNA homotrimer and the checkpoint clamp DDC1:MEC3:RAD17 complex. During a clamp loading circle, the RFC:clamp complex binds to DNA and the recognition of the double-stranded/single-stranded junction stimulates ATP hydrolysis by RFC. The complex presumably provides bipartite ATP sites in which one subunit supplies a catalytic site for hydrolysis of ATP bound to the neighboring subunit. Dissociation of RFC from the clamp leaves the clamp encircling DNA. Component of the replication factor C (RFC or activator 1) complex which loads POL30/PCNA and acts during elongation of primed DNA templates by DNA polymerase delta and epsilon. RFC has an essential but redundant activity in sister chromatid cohesion establishment. Component of the RFC-like complex CTF18-RFC which is required for efficient establishment of chromosome cohesion during S-phase and may load or unload POL30/PCNA. Component of the RFC-like RAD24-RFC complex which loads the checkpoint clamp DDC1:MEC3:RAD17 complex and is involved in DNA repair pathways. Component of the RFC-like ELG1-RFC complex which appears to have a role in DNA replication, replication fork re-start, recombination and repair. RFC3 supplies a catalytic site to the ATP site of RFC4. This chain is Replication factor C subunit 3 (RFC3), found in Saccharomyces cerevisiae (strain ATCC 204508 / S288c) (Baker's yeast).